The chain runs to 517 residues: General transcription factor IIF subunit 1 (517 aa).

Ala-2 is modified (N-acetylalanine). Thr-156 bears the Phosphothreonine mark. Residues 178-458 (QQRRLKDQDQ…SGDVQVTEDA (281 aa)) form a disordered region. Over residues 210–225 (LEDDLEMSSDDSEASG) the composition is skewed to acidic residues. A phosphoserine mark is found at Ser-217, Ser-218, Ser-221, and Ser-224. The segment covering 232-251 (PKAKKKAPPSKGGRKKKKKK) has biased composition (basic residues). 2 stretches are compositionally biased toward acidic residues: residues 255–270 (DEAF…EGQE) and 303–325 (EQSE…EEEE). Thr-331 is subject to Phosphothreonine. Residues 343-355 (EESDSSEESDIDS) are compositionally biased toward acidic residues. A compositionally biased stretch (basic residues) spans 364–374 (AKKKTPPKRER). Residues Ser-377, Ser-380, Ser-381, and Ser-385 each carry the phosphoserine modification. The span at 377 to 391 (SGGSSRGNSRPGTPS) shows a compositional bias: low complexity. Thr-389 bears the Phosphothreonine mark. At Ser-391 the chain carries Phosphoserine. A compositionally biased stretch (polar residues) spans 392–401 (TEAGSTSSTL). Lys-407 is subject to N6-acetyllysine. A compositionally biased stretch (polar residues) spans 428-452 (GPQSLSGKSTPQPQSGKSTPSSGDV). Phosphoserine is present on residues Ser-431, Ser-433, and Ser-436. Thr-437 and Thr-446 each carry phosphothreonine. At Ser-449 the chain carries Phosphoserine.

Belongs to the TFIIF alpha subunit family. As to quaternary structure, heterodimer of an alpha and a beta subunit. Interacts with GTF2F2, CTDP1, TAF6/TAFII80 and URI1. Interacts with GTF2B (via C-terminus and preferentially via acetylated form); this interaction prevents binding of GTF2B to GTF2F2. Part of TBP-based Pol II pre-initiation complex (PIC), in which Pol II core assembles with general transcription factors and other specific initiation factors including GTF2E1, GTF2E2, GTF2F1, GTF2F2, TCEA1, ERCC2, ERCC3, GTF2H2, GTF2H3, GTF2H4, GTF2H5, GTF2A1, GTF2A2, GTF2B and TBP; this large multi-subunit PIC complex mediates DNA unwinding and targets Pol II core to the transcription start site where the first phosphodiester bond forms. Phosphorylated on Ser and other residues by TAF1 and casein kinase II-like kinases.

The protein resides in the nucleus. In terms of biological role, TFIIF is a general transcription initiation factor that binds to RNA polymerase II and helps to recruit it to the initiation complex in collaboration with TFIIB. It promotes transcription elongation. The protein is General transcription factor IIF subunit 1 (GTF2F1) of Bos taurus (Bovine).